The sequence spans 882 residues: MTALTGDQIRQKFLDFYAAKGHTILPSASLIPDDPTVLLTIAGMLPFKPIFLGQEAPKVPRATTAQKCLRTNDIENVGRTARHHTFFEMLGNFSFGDYFKGEAIAWAWELMTTVYGLPPERLLVSVFENDDEAYDIWHRQVGLPKERIQRMGEESNFWTAGPTGPCGPCSEIYYDFYPEKGLANVDLDDDGRFIELYNLVFMELNQDDQGHRTPLKAKNIDTGMGLERMAQVLQGVPNNYETDLIFPIIEAAAQRAGIQYQKANASTQTSLKVIGDHTRAVVHLIADGVTASNVGRGYVLRRLIRRIVRHSRLLGINGLVTPDLAQVAIDLAANVYPNVRERQAVILSELQREEEQFLKTLDRGEKLLAEMLSPLKKAKGKKRSQPQLAGRDAFVLFDTYGFPLELTQEIAAEQGIGVDVAEFEACMAEQRQRSQAAHETIDVTVQEGIDSLGDQLHPTQFRGYEELSLTTTVTAILVAGHPATTATAGTEVQVILEATPFYAESGGQIGDRGYLASSDALVHIHDVQKQKELFVHYGKVERGSLKVGDRVSAQIDLSCRRRVQAHHTATHLLQAALKKLIDENISQAGSLVAFDRLRFDFNCPRPLTREELQQIEDQINAWISESHTTHTYIMALSEAKAKGAIAMFGEKYGEQVRVLDIPGVSMELCGGTHVHNTAEIGLFKIISESGVAAGIRRIEAIAGAAVRDYLQQRDSIVRELCDRFKAKPEEILDRISQLQADLKAQQKALEHLKAELALAKTQALLEQAKPVGNSHVLIASLAGVDPQGLKTAAEWLLNKLGSGAVVLATQPAADKVNLLVAASQDVVQRGVHAGQLVAALAQVCGGRGGGRPNFAQAGGSQPAKLAEALELAHSRLKEILES.

Residues His567, His571, Cys669, and His673 each coordinate Zn(2+).

It belongs to the class-II aminoacyl-tRNA synthetase family. Zn(2+) serves as cofactor.

It is found in the cytoplasm. The enzyme catalyses tRNA(Ala) + L-alanine + ATP = L-alanyl-tRNA(Ala) + AMP + diphosphate. In terms of biological role, catalyzes the attachment of alanine to tRNA(Ala) in a two-step reaction: alanine is first activated by ATP to form Ala-AMP and then transferred to the acceptor end of tRNA(Ala). Also edits incorrectly charged Ser-tRNA(Ala) and Gly-tRNA(Ala) via its editing domain. In Thermosynechococcus vestitus (strain NIES-2133 / IAM M-273 / BP-1), this protein is Alanine--tRNA ligase.